The chain runs to 122 residues: MKIEASALRQLGIKQIEERAAEIKADLAALRQKKNSGDVGANDIKTAKKNLARALTVRREKILEELVEAYRGTPVSKLPKELRPKLNRSKRRALTKTQLRRKTRRQRARMSKFPRVIFAYNE.

Positions 10–69 form a coiled coil; it reads QLGIKQIEERAAEIKADLAALRQKKNSGDVGANDIKTAKKNLARALTVRREKILEELVEA.

This sequence belongs to the universal ribosomal protein uL29 family. Component of the large ribosomal subunit.

The protein resides in the cytoplasm. The chain is Large ribosomal subunit protein uL29A (RPL35A) from Encephalitozoon cuniculi (strain GB-M1) (Microsporidian parasite).